A 445-amino-acid chain; its full sequence is 23S rRNA (uracil(1939)-C(5))-methyltransferase RlmD (445 aa).

Residues 12 to 70 (SKQLSSKLSLNVTQLDHLGAGIAHHQGKIVFINGALPGETVQVQLTEQKKKFSRAKLLK) enclose the TRAM domain. [4Fe-4S] cluster-binding residues include C83, C89, C92, and C171. 6 residues coordinate S-adenosyl-L-methionine: Q278, F307, N312, E328, D355, and D375. The active-site Nucleophile is the C401.

It belongs to the class I-like SAM-binding methyltransferase superfamily. RNA M5U methyltransferase family. RlmD subfamily.

The catalysed reaction is uridine(1939) in 23S rRNA + S-adenosyl-L-methionine = 5-methyluridine(1939) in 23S rRNA + S-adenosyl-L-homocysteine + H(+). Functionally, catalyzes the formation of 5-methyl-uridine at position 1939 (m5U1939) in 23S rRNA. The chain is 23S rRNA (uracil(1939)-C(5))-methyltransferase RlmD from Shewanella piezotolerans (strain WP3 / JCM 13877).